Here is a 363-residue protein sequence, read N- to C-terminus: NAD(P)H-quinone oxidoreductase subunit 1, chloroplastic (363 aa).

7 helical membrane passes run 28-48, 98-118, 129-149, 253-273, 274-294, 300-320, and 336-356; these read WVLA…LVIV, FSIG…VIPF, IGIF…LMSG, FGLF…FVTV, LYLG…LVEI, IFGT…FLFI, and LLNL…LLTT.

Belongs to the complex I subunit 1 family. In terms of assembly, NDH is composed of at least 16 different subunits, 5 of which are encoded in the nucleus.

The protein localises to the plastid. The protein resides in the chloroplast thylakoid membrane. The catalysed reaction is a plastoquinone + NADH + (n+1) H(+)(in) = a plastoquinol + NAD(+) + n H(+)(out). It catalyses the reaction a plastoquinone + NADPH + (n+1) H(+)(in) = a plastoquinol + NADP(+) + n H(+)(out). NDH shuttles electrons from NAD(P)H:plastoquinone, via FMN and iron-sulfur (Fe-S) centers, to quinones in the photosynthetic chain and possibly in a chloroplast respiratory chain. The immediate electron acceptor for the enzyme in this species is believed to be plastoquinone. Couples the redox reaction to proton translocation, and thus conserves the redox energy in a proton gradient. The protein is NAD(P)H-quinone oxidoreductase subunit 1, chloroplastic of Citrus sinensis (Sweet orange).